The following is a 309-amino-acid chain: Ecotin-like protein 3 (309 aa).

The tract at residues glutamine 140–serine 309 is disordered. Over residues valine 156 to alanine 167 the composition is skewed to basic and acidic residues. The span at histidine 168–valine 180 shows a compositional bias: low complexity. A compositionally biased stretch (basic and acidic residues) spans serine 181–methionine 190. A compositionally biased stretch (low complexity) spans leucine 196 to arginine 205. Over residues histidine 209–leucine 221 the composition is skewed to polar residues. A compositionally biased stretch (basic and acidic residues) spans serine 261 to valine 279. Positions serine 290–lysine 299 are enriched in low complexity.

This sequence belongs to the protease inhibitor I11 (ecotin) family.

The protein is Ecotin-like protein 3 of Leishmania braziliensis.